The chain runs to 343 residues: MHPPPPGPLGDCLRDWEELQQDFHGIQETHRLYRLKLEELTKLQNSCTSSITRQKKRLQELALVLRKCKPSLPSEAEEAARELENQIKERQGLFFDMEAYLPKKNGLYLSLVLGNVNVTLLSKQAKFAYKDEYEKFKLYLTIILILISFTCRFLLNSRVTDAAFNFLLVWYYCTLTIRESILINNGSRIKGWWVFHHYVSTFLSGVMLTWPDGLMYQKFRNQFLSFSMYQSFVQFLQYYYQSGCLYRLRALGERHTMDLTVEGFQSWMWRGLTFLLPFLFFGHFWQLFNALTLFNLARDPECKEWQVLMCGFPFLLLFLGNFFTTLRVVHQKFHNQLHGSKKE.

Topologically, residues 1 to 132 (MHPPPPGPLG…KQAKFAYKDE (132 aa)) are cytoplasmic. Lys130 contributes to the CoA binding site. A helical transmembrane segment spans residues 133–152 (YEKFKLYLTIILILISFTCR). Residues 153 to 158 (FLLNSR) lie on the Extracellular side of the membrane. The chain crosses the membrane as a helical span at residues 159–177 (VTDAAFNFLLVWYYCTLTI). Residues 178 to 190 (RESILINNGSRIK) are Cytoplasmic-facing. CoA contacts are provided by Ser187 and Arg188. The chain crosses the membrane as a helical span at residues 191 to 209 (GWWVFHHYVSTFLSGVMLT). Residues 210–218 (WPDGLMYQK) lie on the Extracellular side of the membrane. A helical membrane pass occupies residues 219–240 (FRNQFLSFSMYQSFVQFLQYYY). Residues Gln237, Tyr240, Gln241, and His283 each contribute to the CoA site. At 241–270 (QSGCLYRLRALGERHTMDLTVEGFQSWMWR) the chain is on the cytoplasmic side. Residues 271–294 (GLTFLLPFLFFGHFWQLFNALTLF) form a helical membrane-spanning segment. Residues 295-304 (NLARDPECKE) lie on the Extracellular side of the membrane. A helical transmembrane segment spans residues 305 to 330 (WQVLMCGFPFLLLFLGNFFTTLRVVH). At 331-343 (QKFHNQLHGSKKE) the chain is on the cytoplasmic side. Lys332 contributes to the CoA binding site.

The protein belongs to the TMEM120 family. Homodimer. Forms heterooligomer with TMEM120B. Interacts with PKD2; TMEM120A inhibits PKD2 channel activity through the physical association of PKD2 with TMEM120A.

The protein resides in the cell membrane. Its subcellular location is the nucleus inner membrane. It localises to the endoplasmic reticulum. Its function is as follows. Multifunctional protein involved in mechanosensation, and plays an essential role in lipid metabolism and adipocyte differentiation. May function as an ion channel involved in sensing mechanical stimuli. Mediates the mechanosensitivity of the PKD2-TMEM120A channel complex through direct physical interaction. TMEM120A seems to affect mechanosensation by inhibiting PIEZO2 channels, possibly by altering cellular lipid content. TMEM120A is structurally similar to a lipid-modifying enzyme, ELOVL7, and contains a bound coenzyme A molecule, which suggests it might function as an enzyme in lipid metabolism. Additionnaly, implicated in innate immune response against Zika virus. Acts as a key activator of the antiviral signaling involving STING1. This chain is Transmembrane protein 120A, found in Bos taurus (Bovine).